Here is a 494-residue protein sequence, read N- to C-terminus: GDP-fucose protein O-fucosyltransferase 4 (494 aa).

Residues Met-1–Glu-7 lie on the Cytoplasmic side of the membrane. A helical; Signal-anchor for type II membrane protein transmembrane segment spans residues Ala-8–Ser-24. Residues Ser-25–Leu-494 lie on the Lumenal side of the membrane. Asn-167 is a glycosylation site (N-linked (GlcNAc...) asparagine). Cys-390 and Cys-393 form a disulfide bridge.

This sequence belongs to the glycosyltransferase 10 family.

The protein localises to the endoplasmic reticulum membrane. The catalysed reaction is L-threonyl-[protein] + GDP-beta-L-fucose = 3-O-(alpha-L-fucosyl)-L-threonyl-[protein] + GDP + H(+). It carries out the reaction L-seryl-[protein] + GDP-beta-L-fucose = 3-O-(alpha-L-fucosyl)-L-seryl-[protein] + GDP + H(+). It functions in the pathway protein modification; protein glycosylation. Protein O-fucosyltransferase that specifically catalyzes O-fucosylation of serine or threonine residues in EMI domains of target proteins, such as MMRN1, MMRN2 and EMID1. Attaches fucose through an O-glycosidic linkage. O-fucosylation of EMI domain-containing proteins may be required for facilitating protein folding and secretion. Also shows minor alpha-(1,3)-fucosyltransferase activity toward activity toward biantennary N-glycan acceptors. However, this was tested with a library of synthetic substrates and this activity is unsure in vivo. The polypeptide is GDP-fucose protein O-fucosyltransferase 4 (Fut11) (Rattus norvegicus (Rat)).